We begin with the raw amino-acid sequence, 65 residues long: Kassorin-M (65 aa).

A signal peptide spans 1-22; that stretch reads MLTLKKSMLLLFFLGMVSFSLA. A propeptide spanning residues 23–51 is cleaved from the precursor; it reads DDKREDEAEEGEDKRADEGEEKRAAEKKR. The interval 24 to 45 is disordered; sequence DKREDEAEEGEDKRADEGEEKR. Leu-64 carries the post-translational modification Leucine amide.

It belongs to the frog skin active peptide (FSAP) family. Brevinin subfamily. As to expression, expressed by the skin glands.

Its subcellular location is the secreted. Induces contraction of smooth muscle in isolated guinea pig urinary bladder (EC50=4.66 nM). Has no antimicrobial activity against the Gram-positive bacterium S.aureus, the Gram-negative bacterium E.coli and the yeast C.albicans. Elicits histamine release from rat peritoneal mast cells. The sequence is that of Kassorin-M from Phlyctimantis maculatus (Red-legged running frog).